A 673-amino-acid polypeptide reads, in one-letter code: UvrABC system protein B (673 aa).

The 389-residue stretch at 26 to 414 (ANFEAGLAKQ…AGEITELVVR (389 aa)) folds into the Helicase ATP-binding domain. An ATP-binding site is contributed by 39–46 (GVTGSGKT). The Beta-hairpin motif lies at 92–115 (YYDYYQPEAYVPSSDTFIEKDSSI). The region spanning 431 to 597 (QVDDLMSEVH…SVARPISDIM (167 aa)) is the Helicase C-terminal domain. Positions 601–626 (REDAAEKKAGKGRSKSRQVAEEPADY) are disordered. Residues 635-670 (AGKLKALEQKMYQHAKDLEFEAAAQIRDQILKLKAA) enclose the UVR domain.

The protein belongs to the UvrB family. As to quaternary structure, forms a heterotetramer with UvrA during the search for lesions. Interacts with UvrC in an incision complex.

It is found in the cytoplasm. Its function is as follows. The UvrABC repair system catalyzes the recognition and processing of DNA lesions. A damage recognition complex composed of 2 UvrA and 2 UvrB subunits scans DNA for abnormalities. Upon binding of the UvrA(2)B(2) complex to a putative damaged site, the DNA wraps around one UvrB monomer. DNA wrap is dependent on ATP binding by UvrB and probably causes local melting of the DNA helix, facilitating insertion of UvrB beta-hairpin between the DNA strands. Then UvrB probes one DNA strand for the presence of a lesion. If a lesion is found the UvrA subunits dissociate and the UvrB-DNA preincision complex is formed. This complex is subsequently bound by UvrC and the second UvrB is released. If no lesion is found, the DNA wraps around the other UvrB subunit that will check the other stand for damage. The protein is UvrABC system protein B of Xanthomonas campestris pv. campestris (strain 8004).